The sequence spans 718 residues: Methionine--tRNA ligase (718 aa).

A 'HIGH' region motif is present at residues 27-37; the sequence is PYANGQIHIGH. The Zn(2+) site is built by cysteine 158, cysteine 161, cysteine 171, and cysteine 174. A 'KMSKS' region motif is present at residues 348-352; the sequence is KMSKS. Residue lysine 351 participates in ATP binding. The tRNA-binding domain occupies 612 to 718; that stretch reads DFAKIDLRIA…SGAKPGMRVK (107 aa).

This sequence belongs to the class-I aminoacyl-tRNA synthetase family. MetG type 1 subfamily. In terms of assembly, homodimer. Zn(2+) is required as a cofactor.

The protein resides in the cytoplasm. The enzyme catalyses tRNA(Met) + L-methionine + ATP = L-methionyl-tRNA(Met) + AMP + diphosphate. Functionally, is required not only for elongation of protein synthesis but also for the initiation of all mRNA translation through initiator tRNA(fMet) aminoacylation. The protein is Methionine--tRNA ligase of Burkholderia orbicola (strain AU 1054).